Here is a 453-residue protein sequence, read N- to C-terminus: Phosphoglucosamine mutase (453 aa).

Ser102 (phosphoserine intermediate) is an active-site residue. Residues Ser102, Asp244, Asp246, and Asp248 each contribute to the Mg(2+) site. Phosphoserine is present on Ser102.

The protein belongs to the phosphohexose mutase family. The cofactor is Mg(2+). In terms of processing, activated by phosphorylation.

The enzyme catalyses alpha-D-glucosamine 1-phosphate = D-glucosamine 6-phosphate. Catalyzes the conversion of glucosamine-6-phosphate to glucosamine-1-phosphate. The chain is Phosphoglucosamine mutase from Pelobacter propionicus (strain DSM 2379 / NBRC 103807 / OttBd1).